Reading from the N-terminus, the 174-residue chain is NAD(P)H-quinone oxidoreductase subunit J, chloroplastic (174 aa).

This sequence belongs to the complex I 30 kDa subunit family. As to quaternary structure, NDH is composed of at least 16 different subunits, 5 of which are encoded in the nucleus.

The protein resides in the plastid. It localises to the chloroplast thylakoid membrane. The catalysed reaction is a plastoquinone + NADH + (n+1) H(+)(in) = a plastoquinol + NAD(+) + n H(+)(out). The enzyme catalyses a plastoquinone + NADPH + (n+1) H(+)(in) = a plastoquinol + NADP(+) + n H(+)(out). Functionally, NDH shuttles electrons from NAD(P)H:plastoquinone, via FMN and iron-sulfur (Fe-S) centers, to quinones in the photosynthetic chain and possibly in a chloroplast respiratory chain. The immediate electron acceptor for the enzyme in this species is believed to be plastoquinone. Couples the redox reaction to proton translocation, and thus conserves the redox energy in a proton gradient. In Mesostigma viride (Green alga), this protein is NAD(P)H-quinone oxidoreductase subunit J, chloroplastic.